A 93-amino-acid chain; its full sequence is YcgL domain-containing protein KPN78578_22820 (93 aa).

Residues 1–85 (MFCVIYRSTK…PSENLLKKHL (85 aa)) enclose the YcgL domain.

This Klebsiella pneumoniae subsp. pneumoniae (strain ATCC 700721 / MGH 78578) protein is YcgL domain-containing protein KPN78578_22820.